A 332-amino-acid polypeptide reads, in one-letter code: Beta-ketoacyl-[acyl-carrier-protein] synthase III (332 aa).

Residues Cys112 and His252 contribute to the active site. The interval 253-257 (QANLR) is ACP-binding. Asn282 is an active-site residue.

This sequence belongs to the thiolase-like superfamily. FabH family. Homodimer.

Its subcellular location is the cytoplasm. The catalysed reaction is malonyl-[ACP] + acetyl-CoA + H(+) = 3-oxobutanoyl-[ACP] + CO2 + CoA. It functions in the pathway lipid metabolism; fatty acid biosynthesis. Catalyzes the condensation reaction of fatty acid synthesis by the addition to an acyl acceptor of two carbons from malonyl-ACP. Catalyzes the first condensation reaction which initiates fatty acid synthesis and may therefore play a role in governing the total rate of fatty acid production. Possesses both acetoacetyl-ACP synthase and acetyl transacylase activities. Its substrate specificity determines the biosynthesis of branched-chain and/or straight-chain of fatty acids. In Syntrophomonas wolfei subsp. wolfei (strain DSM 2245B / Goettingen), this protein is Beta-ketoacyl-[acyl-carrier-protein] synthase III.